The chain runs to 369 residues: Carbamoyl phosphate synthase small chain (369 aa).

Positions M1–D168 are CPSase. L-glutamine contacts are provided by S45, G220, and G222. One can recognise a Glutamine amidotransferase type-1 domain in the interval S172–E364. C247 acts as the Nucleophile in catalysis. L248, Q251, N289, G291, and F292 together coordinate L-glutamine. Active-site residues include H337 and E339.

It belongs to the CarA family. In terms of assembly, composed of two chains; the small (or glutamine) chain promotes the hydrolysis of glutamine to ammonia, which is used by the large (or ammonia) chain to synthesize carbamoyl phosphate. Tetramer of heterodimers (alpha,beta)4.

The enzyme catalyses hydrogencarbonate + L-glutamine + 2 ATP + H2O = carbamoyl phosphate + L-glutamate + 2 ADP + phosphate + 2 H(+). It catalyses the reaction L-glutamine + H2O = L-glutamate + NH4(+). It participates in amino-acid biosynthesis; L-arginine biosynthesis; carbamoyl phosphate from bicarbonate: step 1/1. The protein operates within pyrimidine metabolism; UMP biosynthesis via de novo pathway; (S)-dihydroorotate from bicarbonate: step 1/3. Small subunit of the glutamine-dependent carbamoyl phosphate synthetase (CPSase). CPSase catalyzes the formation of carbamoyl phosphate from the ammonia moiety of glutamine, carbonate, and phosphate donated by ATP, constituting the first step of 2 biosynthetic pathways, one leading to arginine and/or urea and the other to pyrimidine nucleotides. The small subunit (glutamine amidotransferase) binds and cleaves glutamine to supply the large subunit with the substrate ammonia. The chain is Carbamoyl phosphate synthase small chain from Methanococcus vannielii (strain ATCC 35089 / DSM 1224 / JCM 13029 / OCM 148 / SB).